We begin with the raw amino-acid sequence, 131 residues long: Small ribosomal subunit protein uS11 (131 aa).

It belongs to the universal ribosomal protein uS11 family. As to quaternary structure, part of the 30S ribosomal subunit. Interacts with proteins S7 and S18. Binds to IF-3.

Its function is as follows. Located on the platform of the 30S subunit, it bridges several disparate RNA helices of the 16S rRNA. Forms part of the Shine-Dalgarno cleft in the 70S ribosome. This chain is Small ribosomal subunit protein uS11, found in Trichormus variabilis (strain ATCC 29413 / PCC 7937) (Anabaena variabilis).